The sequence spans 537 residues: Glucose-6-phosphate isomerase (537 aa).

Glu341 acts as the Proton donor in catalysis. Catalysis depends on residues His372 and Lys501.

Belongs to the GPI family.

The protein resides in the cytoplasm. The enzyme catalyses alpha-D-glucose 6-phosphate = beta-D-fructose 6-phosphate. The protein operates within carbohydrate biosynthesis; gluconeogenesis. It functions in the pathway carbohydrate degradation; glycolysis; D-glyceraldehyde 3-phosphate and glycerone phosphate from D-glucose: step 2/4. Functionally, catalyzes the reversible isomerization of glucose-6-phosphate to fructose-6-phosphate. This is Glucose-6-phosphate isomerase from Jannaschia sp. (strain CCS1).